The chain runs to 282 residues: ATP synthase gamma chain (282 aa).

The protein belongs to the ATPase gamma chain family. In terms of assembly, F-type ATPases have 2 components, CF(1) - the catalytic core - and CF(0) - the membrane proton channel. CF(1) has five subunits: alpha(3), beta(3), gamma(1), delta(1), epsilon(1). CF(0) has three main subunits: a, b and c.

It is found in the cell membrane. In terms of biological role, produces ATP from ADP in the presence of a proton gradient across the membrane. The gamma chain is believed to be important in regulating ATPase activity and the flow of protons through the CF(0) complex. The polypeptide is ATP synthase gamma chain (Clostridium acetobutylicum (strain ATCC 824 / DSM 792 / JCM 1419 / IAM 19013 / LMG 5710 / NBRC 13948 / NRRL B-527 / VKM B-1787 / 2291 / W)).